The following is a 325-amino-acid chain: Psp operon transcriptional activator (325 aa).

Positions 15–237 (FLEVLEQVSH…ELKNVVERSV (223 aa)) constitute a Sigma-54 factor interaction domain. Residues 36-43 (GERGTGKE) and 99-108 (ADGGTLFLDE) each bind ATP. The segment at residues 302–321 (QKRAAELLGLTYHQFRALLK) is a DNA-binding region (H-T-H motif).

As to quaternary structure, forms a complex with PspA, which is composed of around 6 PspF subunits and 6 PspA subunits.

Its subcellular location is the cytoplasm. With respect to regulation, ATPase activity is inhibited by interaction with PspA. Under inducing conditions, the interaction is disrupted, allowing activation of psp transcription. In terms of biological role, transcriptional activator for the phage shock protein (psp) operon (pspABCDE) and pspG gene. In Escherichia coli (strain K12), this protein is Psp operon transcriptional activator (pspF).